We begin with the raw amino-acid sequence, 216 residues long: Ceramide-1-phosphate transfer protein (216 aa).

Positions 56, 60, 108, 112, and 152 each coordinate an N-acylsphingoid base 1-phosphate.

It belongs to the GLTP family.

Its subcellular location is the cytoplasm. The protein localises to the cytosol. It is found in the golgi apparatus. It localises to the trans-Golgi network membrane. The protein resides in the cell membrane. Its subcellular location is the endosome membrane. The protein localises to the nucleus outer membrane. The enzyme catalyses N-(hexadecanoyl)-sphing-4-enine-1-phosphate(in) = N-(hexadecanoyl)-sphing-4-enine-1-phosphate(out). It carries out the reaction N-(9Z-octadecenoyl)-sphing-4-enine-1-phosphate(in) = N-(9Z-octadecenoyl)-sphing-4-enine-1-phosphate(out). Its function is as follows. Mediates the intracellular transfer of ceramide-1-phosphate (C1P) between organelle membranes and the cell membrane. Required for normal structure of the Golgi stacks. Can bind phosphoceramides with a variety of aliphatic chains, but has a preference for lipids with saturated C16:0 or monounsaturated C18:1 aliphatic chains, and is inefficient with phosphoceramides containing lignoceryl (C24:0). Plays a role in the regulation of the cellular levels of ceramide-1-phosphate, and thereby contributes to the regulation of phospholipase PLA2G4A activity and the release of arachidonic acid. Has no activity with galactosylceramide, lactosylceramide, sphingomyelin, phosphatidylcholine, phosphatidic acid and ceramide. C1P transfer is stimulated by phosphatidylserine in C1P source vesicles. Regulates autophagy, inflammasome mediated IL1B and IL18 processing, and pyroptosis, but not apoptosis. This Rattus norvegicus (Rat) protein is Ceramide-1-phosphate transfer protein (Cptp).